The chain runs to 171 residues: Auxin-responsive protein IAA33 (171 aa).

Composition is skewed to polar residues over residues 1 to 11 and 19 to 32; these read MNSFEPQSQDS and DNST…TTTP. The tract at residues 1 to 51 is disordered; sequence MNSFEPQSQDSLQRRFHQDNSTTQQPRDTTTPFIPKPASKNHNNSNSSSGA. Low complexity predominate over residues 40–49; it reads KNHNNSNSSS. One can recognise a PB1 domain in the interval 72-162; that stretch reads VPPVTVVLEG…KRIRILPVKG (91 aa).

The protein belongs to the Aux/IAA family. As to quaternary structure, homodimers and heterodimers.

The protein resides in the nucleus. Aux/IAA proteins are short-lived transcriptional factors that function as repressors of early auxin response genes at low auxin concentrations. Repression is thought to result from the interaction with auxin response factors (ARFs), proteins that bind to the auxin-responsive promoter element (AuxRE). Formation of heterodimers with ARF proteins may alter their ability to modulate early auxin response genes expression. The sequence is that of Auxin-responsive protein IAA33 (IAA33) from Arabidopsis thaliana (Mouse-ear cress).